A 188-amino-acid chain; its full sequence is RNA 2',3'-cyclic phosphodiesterase (188 aa).

His42 functions as the Proton donor in the catalytic mechanism. 2 consecutive short sequence motifs (HXTX) follow at residues 42 to 45 (HMTL) and 130 to 133 (HVTI). His130 acts as the Proton acceptor in catalysis.

This sequence belongs to the 2H phosphoesterase superfamily. ThpR family.

It catalyses the reaction a 3'-end 2',3'-cyclophospho-ribonucleotide-RNA + H2O = a 3'-end 2'-phospho-ribonucleotide-RNA + H(+). In terms of biological role, hydrolyzes RNA 2',3'-cyclic phosphodiester to an RNA 2'-phosphomonoester. The polypeptide is RNA 2',3'-cyclic phosphodiesterase (Aquifex aeolicus (strain VF5)).